We begin with the raw amino-acid sequence, 79 residues long: Acyl carrier protein (79 aa).

The 77-residue stretch at 1–77 (MNNVEKKIKK…KSIDYINNKN (77 aa)) folds into the Carrier domain. At S37 the chain carries O-(pantetheine 4'-phosphoryl)serine.

This sequence belongs to the acyl carrier protein (ACP) family. 4'-phosphopantetheine is transferred from CoA to a specific serine of apo-ACP by AcpS. This modification is essential for activity because fatty acids are bound in thioester linkage to the sulfhydryl of the prosthetic group.

It is found in the cytoplasm. The protein operates within lipid metabolism; fatty acid biosynthesis. In terms of biological role, carrier of the growing fatty acid chain in fatty acid biosynthesis. This is Acyl carrier protein from Buchnera aphidicola subsp. Schizaphis graminum (strain Sg).